A 504-amino-acid polypeptide reads, in one-letter code: Maturase K (504 aa).

It belongs to the intron maturase 2 family. MatK subfamily.

Its subcellular location is the plastid. The protein resides in the chloroplast. Functionally, usually encoded in the trnK tRNA gene intron. Probably assists in splicing its own and other chloroplast group II introns. The polypeptide is Maturase K (Simmondsia chinensis (Jojoba)).